The chain runs to 443 residues: Tryptophan synthase beta chain 2, chloroplastic (443 aa).

The disordered stretch occupies residues 1-32 (PGPPPPAPEGRRRRGRGRNAAGQAVAAEASPA). A chloroplast-targeting transit peptide spans 1–45 (PGPPPPAPEGRRRRGRGRNAAGQAVAAEASPAAVEMGNGAAAPGL). The segment covering 18 to 32 (RNAAGQAVAAEASPA) has biased composition (low complexity). At lysine 138 the chain carries N6-(pyridoxal phosphate)lysine.

It belongs to the TrpB family. Tetramer of two alpha and two beta chains. Pyridoxal 5'-phosphate serves as cofactor.

The protein localises to the plastid. It localises to the chloroplast. The enzyme catalyses (1S,2R)-1-C-(indol-3-yl)glycerol 3-phosphate + L-serine = D-glyceraldehyde 3-phosphate + L-tryptophan + H2O. It participates in amino-acid biosynthesis; L-tryptophan biosynthesis; L-tryptophan from chorismate: step 5/5. The beta subunit is responsible for the synthesis of L-tryptophan from indole and L-serine. The polypeptide is Tryptophan synthase beta chain 2, chloroplastic (TSB2) (Zea mays (Maize)).